The following is a 149-amino-acid chain: 3-hydroxyacyl-[acyl-carrier-protein] dehydratase FabZ (149 aa).

H53 is a catalytic residue.

The protein belongs to the thioester dehydratase family. FabZ subfamily.

Its subcellular location is the cytoplasm. It carries out the reaction a (3R)-hydroxyacyl-[ACP] = a (2E)-enoyl-[ACP] + H2O. Involved in unsaturated fatty acids biosynthesis. Catalyzes the dehydration of short chain beta-hydroxyacyl-ACPs and long chain saturated and unsaturated beta-hydroxyacyl-ACPs. This chain is 3-hydroxyacyl-[acyl-carrier-protein] dehydratase FabZ, found in Neisseria gonorrhoeae (strain ATCC 700825 / FA 1090).